Reading from the N-terminus, the 164-residue chain is NADPH-dependent 7-cyano-7-deazaguanine reductase (164 aa).

Cysteine 55 acts as the Thioimide intermediate in catalysis. Aspartate 62 (proton donor) is an active-site residue. Substrate contacts are provided by residues 77–79 (VES) and 96–97 (HE).

This sequence belongs to the GTP cyclohydrolase I family. QueF type 1 subfamily.

The protein resides in the cytoplasm. The enzyme catalyses 7-aminomethyl-7-carbaguanine + 2 NADP(+) = 7-cyano-7-deazaguanine + 2 NADPH + 3 H(+). Its pathway is tRNA modification; tRNA-queuosine biosynthesis. Functionally, catalyzes the NADPH-dependent reduction of 7-cyano-7-deazaguanine (preQ0) to 7-aminomethyl-7-deazaguanine (preQ1). The protein is NADPH-dependent 7-cyano-7-deazaguanine reductase of Bacillus velezensis (strain DSM 23117 / BGSC 10A6 / LMG 26770 / FZB42) (Bacillus amyloliquefaciens subsp. plantarum).